The chain runs to 460 residues: Elongation factor 1-alpha (460 aa).

Position 2 is a n,N,N-trimethylglycine (Gly-2). At Lys-3 the chain carries N6,N6-dimethyllysine; alternate. Position 3 is an N6-methyllysine; alternate (Lys-3). One can recognise a tr-type G domain in the interval 5–240; sequence KTHVNLVVIG…DAIEPPVRPS (236 aa). The interval 14 to 21 is G1; sequence GHVDAGKS. 14–21 contacts GTP; it reads GHVDAGKS. The residue at position 30 (Lys-30) is an N6-methyllysine. The G2 stretch occupies residues 70–74; sequence GITID. Position 79 is an N6,N6,N6-trimethyllysine (Lys-79). Residues 91–94 are G3; it reads DAPG. GTP-binding positions include 91-95 and 153-156; these read DAPGH and NKMD. The tract at residues 153–156 is G4; sequence NKMD. Residues 192–194 are G5; it reads SGW. The residue at position 317 (Lys-317) is an N6,N6-dimethyllysine; alternate. An N6-methyllysine; alternate modification is found at Lys-317. Lys-391 is subject to N6-methyllysine.

It belongs to the TRAFAC class translation factor GTPase superfamily. Classic translation factor GTPase family. EF-Tu/EF-1A subfamily.

It is found in the cytoplasm. In terms of biological role, this protein promotes the GTP-dependent binding of aminoacyl-tRNA to the A-site of ribosomes during protein biosynthesis. In Yarrowia lipolytica (strain CLIB 122 / E 150) (Yeast), this protein is Elongation factor 1-alpha (TEF).